Here is a 274-residue protein sequence, read N- to C-terminus: Dermonecrotic toxin SaSicTox-betaIIB1 (274 aa).

The active site involves His5. Mg(2+) is bound by residues Glu25 and Asp27. His41 acts as the Nucleophile in catalysis. Cystine bridges form between Cys45–Cys51 and Cys47–Cys190. Residue Asp85 participates in Mg(2+) binding.

It belongs to the arthropod phospholipase D family. Class II subfamily. Mg(2+) is required as a cofactor. As to expression, expressed by the venom gland.

It is found in the secreted. The enzyme catalyses an N-(acyl)-sphingosylphosphocholine = an N-(acyl)-sphingosyl-1,3-cyclic phosphate + choline. It catalyses the reaction an N-(acyl)-sphingosylphosphoethanolamine = an N-(acyl)-sphingosyl-1,3-cyclic phosphate + ethanolamine. The catalysed reaction is a 1-acyl-sn-glycero-3-phosphocholine = a 1-acyl-sn-glycero-2,3-cyclic phosphate + choline. It carries out the reaction a 1-acyl-sn-glycero-3-phosphoethanolamine = a 1-acyl-sn-glycero-2,3-cyclic phosphate + ethanolamine. In terms of biological role, dermonecrotic toxins cleave the phosphodiester linkage between the phosphate and headgroup of certain phospholipids (sphingolipid and lysolipid substrates), forming an alcohol (often choline) and a cyclic phosphate. This toxin acts on sphingomyelin (SM). It may also act on ceramide phosphoethanolamine (CPE), lysophosphatidylcholine (LPC) and lysophosphatidylethanolamine (LPE), but not on lysophosphatidylserine (LPS), and lysophosphatidylglycerol (LPG). It acts by transphosphatidylation, releasing exclusively cyclic phosphate products as second products. Induces dermonecrosis, hemolysis, increased vascular permeability, edema, inflammatory response, and platelet aggregation. This chain is Dermonecrotic toxin SaSicTox-betaIIB1, found in Sicarius albospinosus (Six-eyed crab spider).